A 93-amino-acid polypeptide reads, in one-letter code: MAALLNDAEIEERLGDLTGWTRQGNEIRKTFQLPSFPSAIAFVVNVAFLAEAAGHHPDIDIRWRKVTLSLSTHDAGGLTGKDFDLAAQIDEII.

The protein belongs to the pterin-4-alpha-carbinolamine dehydratase family.

The enzyme catalyses (4aS,6R)-4a-hydroxy-L-erythro-5,6,7,8-tetrahydrobiopterin = (6R)-L-erythro-6,7-dihydrobiopterin + H2O. The protein is Putative pterin-4-alpha-carbinolamine dehydratase of Roseiflexus castenholzii (strain DSM 13941 / HLO8).